Consider the following 631-residue polypeptide: Squalene--hopene cyclase (631 aa).

3 PFTB repeats span residues 15–56 (LDRA…LDRV), 61–102 (MEKI…KYIG), and 241–282 (EIRA…QHPA). The Proton donor role is filled by D376. 4 PFTB repeats span residues 400 to 441 (MTKG…GEVT), 468 to 508 (IRRA…KAVG), 516 to 557 (IQKA…SQTA), and 574 to 622 (ARRG…LALG).

The protein belongs to the terpene cyclase/mutase family. As to quaternary structure, homodimer.

The protein resides in the cell membrane. The enzyme catalyses squalene = hop-22(29)-ene. The catalysed reaction is squalene + H2O = hopan-22-ol. It functions in the pathway secondary metabolite biosynthesis; hopanoid biosynthesis. In terms of biological role, catalyzes the cyclization of squalene to two pentacyclic triterpenes, hop-22(29)-ene and hopan-22-ol (diplopterol); hopene and hopanol are formed at a constant ratio of 5:1. Is a key enzyme of hopanoid biosynthesis; hopanoids are components of the bacterial cytoplasmic membranes that play a vital role in stabilizing the membranes. In Alicyclobacillus acidocaldarius subsp. acidocaldarius (strain ATCC 27009 / DSM 446 / BCRC 14685 / JCM 5260 / KCTC 1825 / NBRC 15652 / NCIMB 11725 / NRRL B-14509 / 104-IA) (Bacillus acidocaldarius), this protein is Squalene--hopene cyclase (shc).